Consider the following 422-residue polypeptide: Histidine--tRNA ligase (422 aa).

This sequence belongs to the class-II aminoacyl-tRNA synthetase family. As to quaternary structure, homodimer.

Its subcellular location is the cytoplasm. The enzyme catalyses tRNA(His) + L-histidine + ATP = L-histidyl-tRNA(His) + AMP + diphosphate + H(+). This is Histidine--tRNA ligase (hisS) from Photobacterium profundum (strain SS9).